Here is a 429-residue protein sequence, read N- to C-terminus: GTPase Obg (429 aa).

The 158-residue stretch at 1–158 (MFVDQVKIYV…RNVQLELKVL (158 aa)) folds into the Obg domain. Residues 124–145 (RGNKRFATPANPAPELSENGEP) form a disordered region. Residues 159–329 (ADVGLVGFPS…LLLAIADKLE (171 aa)) enclose the OBG-type G domain. GTP is bound by residues 165-172 (GFPSVGKS), 190-194 (FTTIV), 212-215 (DLPG), 282-285 (NKMD), and 310-312 (SAV). 2 residues coordinate Mg(2+): Ser172 and Thr192. The 79-residue stretch at 351 to 429 (KYIAEEPDFE…LLDYEFEFMD (79 aa)) folds into the OCT domain.

It belongs to the TRAFAC class OBG-HflX-like GTPase superfamily. OBG GTPase family. In terms of assembly, monomer. Mg(2+) is required as a cofactor.

The protein resides in the cytoplasm. In terms of biological role, an essential GTPase which binds GTP, GDP and possibly (p)ppGpp with moderate affinity, with high nucleotide exchange rates and a fairly low GTP hydrolysis rate. Plays a role in control of the cell cycle, stress response, ribosome biogenesis and in those bacteria that undergo differentiation, in morphogenesis control. The polypeptide is GTPase Obg (Listeria welshimeri serovar 6b (strain ATCC 35897 / DSM 20650 / CCUG 15529 / CIP 8149 / NCTC 11857 / SLCC 5334 / V8)).